Here is a 199-residue protein sequence, read N- to C-terminus: Recombination protein RecR (199 aa).

The segment at 57–72 adopts a C4-type zinc-finger fold; the sequence is CTVCGHITDIDPCAIC. In terms of domain architecture, Toprim spans 80–176; the sequence is TVVCVVQDSR…RVTRLAHGLP (97 aa).

Belongs to the RecR family.

Its function is as follows. May play a role in DNA repair. It seems to be involved in an RecBC-independent recombinational process of DNA repair. It may act with RecF and RecO. The sequence is that of Recombination protein RecR from Exiguobacterium sp. (strain ATCC BAA-1283 / AT1b).